The sequence spans 926 residues: Ubiquitin carboxyl-terminal hydrolase 4 (926 aa).

In terms of domain architecture, Rhodanese spans 205–328 (SQMEILLIDI…WLKSNYGRQV (124 aa)). At Ser-443 the chain carries Phosphoserine. The region spanning 562-923 (VGLENLGNSC…NAYVLFYHRV (362 aa)) is the USP domain. Residue Cys-571 is the Nucleophile of the active site. His-880 serves as the catalytic Proton acceptor.

The protein belongs to the peptidase C19 family. As to quaternary structure, interacts with BRO1, RFU1 and VPS32. Associates with the 26S proteasome.

It is found in the cytoplasm. The protein localises to the late endosome membrane. The catalysed reaction is Thiol-dependent hydrolysis of ester, thioester, amide, peptide and isopeptide bonds formed by the C-terminal Gly of ubiquitin (a 76-residue protein attached to proteins as an intracellular targeting signal).. With respect to regulation, RFU1 is an inhibitor of deubiquitination activity. Functionally, ubiquitin thioesterase that acts at the late endosome/prevacuolar compartment to recover ubiquitin from ubiquitinated membrane proteins en route to the vacuole. Also removes ubiquitin from soluble proteins targeted to proteasomes. Is essential to maintain a normal level of free ubiquitin. Involved in the ammonium-induced down-regulation of the GAP1 permease and the UME3 destruction in response to oxidative stress. Has a role in the RAD9 checkpoint response to TOP1 poisons. Required for promoting coordination of DNA replication and avoids DNA overreplication. This is Ubiquitin carboxyl-terminal hydrolase 4 (DOA4) from Saccharomyces cerevisiae (strain RM11-1a) (Baker's yeast).